Here is a 94-residue protein sequence, read N- to C-terminus: Acylphosphatase (94 aa).

The region spanning Arg-3–Tyr-90 is the Acylphosphatase-like domain. Residues Arg-18 and Asn-36 contribute to the active site.

It belongs to the acylphosphatase family.

It catalyses the reaction an acyl phosphate + H2O = a carboxylate + phosphate + H(+). In Geobacillus thermodenitrificans (strain NG80-2), this protein is Acylphosphatase (acyP).